A 447-amino-acid chain; its full sequence is Polyamine export protein (447 aa).

At 1 to 4 (MLNS) the chain is on the cytoplasmic side. Residues 1–197 (MLNSILVILC…ALAGVLRKQE (197 aa)) enclose the CNNM transmembrane domain. Residues 5–25 (ILVILCLIAVSAFFSMSEISL) form a helical membrane-spanning segment. Residues 26–54 (AASRKIKLKLLADEGNINAQRVLNMQENP) lie on the Periplasmic side of the membrane. Residues 55–75 (GMFFTVVQIGLNAVAILGGIV) form a helical membrane-spanning segment. The Cytoplasmic segment spans residues 76 to 99 (GDAAFSPAFHSLFSRYMSAELSEQ). A helical transmembrane segment spans residues 100 to 120 (LSFILSFSLVTGMFILFADLT). Residues 121–141 (PKRIGMIAPEAVALRIINPMR) lie on the Periplasmic side of the membrane. Residues 142 to 162 (FCLYVCTPLVWFFNGLANIIF) form a helical membrane-spanning segment. Topologically, residues 163 to 447 (RIFKLPMVRK…DAKDKEESVA (285 aa)) are cytoplasmic. 2 consecutive CBS domains span residues 216–275 (MTPR…NQSL) and 282–343 (QIRN…GLEE).

The protein belongs to the UPF0053 family. PaeA subfamily.

It is found in the cell inner membrane. Functionally, involved in cadaverine and putrescine tolerance in stationary phase. May facilitate the efflux of both cadaverine and putrescine from the cytoplasm, reducing potentially toxic levels under certain stress conditions. The polypeptide is Polyamine export protein (Escherichia coli O157:H7).